A 348-amino-acid polypeptide reads, in one-letter code: Alanine racemase (348 aa).

Catalysis depends on K34, which acts as the Proton acceptor; specific for D-alanine. Position 34 is an N6-(pyridoxal phosphate)lysine (K34). A substrate-binding site is contributed by R127. Catalysis depends on Y243, which acts as the Proton acceptor; specific for L-alanine. Substrate is bound at residue M291.

This sequence belongs to the alanine racemase family. Pyridoxal 5'-phosphate is required as a cofactor.

It carries out the reaction L-alanine = D-alanine. Its pathway is amino-acid biosynthesis; D-alanine biosynthesis; D-alanine from L-alanine: step 1/1. Its function is as follows. Catalyzes the interconversion of L-alanine and D-alanine. May also act on other amino acids. This Coprothermobacter proteolyticus (strain ATCC 35245 / DSM 5265 / OCM 4 / BT) protein is Alanine racemase (alr).